A 476-amino-acid chain; its full sequence is Bifunctional protein HldE (476 aa).

The ribokinase stretch occupies residues 1-319 (MKVTLPAFEK…GALASHQGES (319 aa)). 195 to 198 (NMSE) contacts ATP. Asp264 is an active-site residue. The tract at residues 345–476 (MTNGCFDILH…SIIQNIMARQ (132 aa)) is cytidylyltransferase.

This sequence in the N-terminal section; belongs to the carbohydrate kinase PfkB family. It in the C-terminal section; belongs to the cytidylyltransferase family. In terms of assembly, homodimer.

The enzyme catalyses D-glycero-beta-D-manno-heptose 7-phosphate + ATP = D-glycero-beta-D-manno-heptose 1,7-bisphosphate + ADP + H(+). It carries out the reaction D-glycero-beta-D-manno-heptose 1-phosphate + ATP + H(+) = ADP-D-glycero-beta-D-manno-heptose + diphosphate. It functions in the pathway nucleotide-sugar biosynthesis; ADP-L-glycero-beta-D-manno-heptose biosynthesis; ADP-L-glycero-beta-D-manno-heptose from D-glycero-beta-D-manno-heptose 7-phosphate: step 1/4. Its pathway is nucleotide-sugar biosynthesis; ADP-L-glycero-beta-D-manno-heptose biosynthesis; ADP-L-glycero-beta-D-manno-heptose from D-glycero-beta-D-manno-heptose 7-phosphate: step 3/4. Functionally, catalyzes the phosphorylation of D-glycero-D-manno-heptose 7-phosphate at the C-1 position to selectively form D-glycero-beta-D-manno-heptose-1,7-bisphosphate. Its function is as follows. Catalyzes the ADP transfer from ATP to D-glycero-beta-D-manno-heptose 1-phosphate, yielding ADP-D-glycero-beta-D-manno-heptose. The sequence is that of Bifunctional protein HldE from Shewanella denitrificans (strain OS217 / ATCC BAA-1090 / DSM 15013).